The sequence spans 186 residues: Ribosome-recycling factor (186 aa).

It belongs to the RRF family.

The protein localises to the cytoplasm. Responsible for the release of ribosomes from messenger RNA at the termination of protein biosynthesis. May increase the efficiency of translation by recycling ribosomes from one round of translation to another. The protein is Ribosome-recycling factor of Prosthecochloris aestuarii (strain DSM 271 / SK 413).